The following is a 664-amino-acid chain: Zinc finger protein 800 (664 aa).

The C2H2-type 1; degenerate zinc-finger motif lies at 69 to 91 (FECKLCRSLFRGLPNLITHKKFY). Lysine 132 participates in a covalent cross-link: Glycyl lysine isopeptide (Lys-Gly) (interchain with G-Cter in SUMO2). Composition is skewed to polar residues over residues 154 to 179 (IEVTESSSTPEQTEVQIQETSTEQSK) and 207 to 224 (SDEQPQESQADLETSDNS). Positions 154–224 (IEVTESSSTP…QADLETSDNS (71 aa)) are disordered. The segment at 230–253 (LICCLCRKEFNSRRGVRRHIRKVH) adopts a C2H2-type 2 zinc-finger fold. Lysine 279 participates in a covalent cross-link: Glycyl lysine isopeptide (Lys-Gly) (interchain with G-Cter in SUMO2). The C2H2-type 3 zinc finger occupies 287–310 (RSCPVCCKSFATKANVRRHFDEVH). The residue at position 317 (serine 317) is a Phosphoserine. A Phosphothreonine modification is found at threonine 319. The segment at 328-349 (QPLFLDSISPKKSFKTRKQKSS) is disordered. Serine 336 carries the phosphoserine modification. Over residues 339 to 348 (KSFKTRKQKS) the composition is skewed to basic residues. The segment at 357-382 (TACKCLLCKRKYSSQIMLKRHMQIVH) adopts a C2H2-type 4 zinc-finger fold. The disordered stretch occupies residues 388–476 (GTNSKREKGP…GGQQKTRKPK (89 aa)). A Glycyl lysine isopeptide (Lys-Gly) (interchain with G-Cter in SUMO2) cross-link involves residue lysine 392. Residue lysine 409 forms a Glycyl lysine isopeptide (Lys-Gly) (interchain with G-Cter in SUMO1); alternate linkage. Lysine 409 is covalently cross-linked (Glycyl lysine isopeptide (Lys-Gly) (interchain with G-Cter in SUMO2); alternate). A compositionally biased stretch (polar residues) spans 416–436 (VESSPPSITHSPQNELKGTNH). Residues serine 422, serine 426, serine 455, serine 457, serine 460, and serine 462 each carry the phosphoserine modification. The span at 458 to 470 (PKSTSPSAAGGQQ) shows a compositional bias: polar residues. A Glycyl lysine isopeptide (Lys-Gly) (interchain with G-Cter in SUMO2) cross-link involves residue lysine 476. 2 C2H2-type zinc fingers span residues 486-508 (LYCKLCKRQFTSKQNLTKHIELH) and 519-542 (YKCPLCTYETRRKRDVIRHITVVH). Disordered regions lie at residues 574 to 599 (KRGPSRDEAKHSDSKHDGTSNSPSKK) and 635 to 664 (HHKKTHKANASNSPEGNKTKGRSTRSKALV). Residues 577–591 (PSRDEAKHSDSKHDG) show a composition bias toward basic and acidic residues. Lysine 599 is covalently cross-linked (Glycyl lysine isopeptide (Lys-Gly) (interchain with G-Cter in SUMO2)). A C2H2-type 7 zinc finger spans residues 618-640 (HRCNKCGKAFAKKTYLEHHKKTH). Positions 653 to 664 (TKGRSTRSKALV) are enriched in basic residues.

The protein belongs to the krueppel C2H2-type zinc-finger protein family.

The protein localises to the nucleus. Its function is as follows. May be involved in transcriptional regulation. In Homo sapiens (Human), this protein is Zinc finger protein 800 (ZNF800).